The chain runs to 263 residues: Microtubule-associated protein RP/EB family member 1 (263 aa).

Residues 14–116 form the Calponin-homology (CH) domain; it reads NLSRHDMLAW…FVQWFKKFFD (103 aa). The tract at residues 150 to 182 is disordered; it reads KPLGTGSAGPQRPIVAQRTPATPKGGTGMVKKA. The EB1 C-terminal domain occupies 180–250; the sequence is KKAAGDDESA…LYATDEGFVI (71 aa).

This sequence belongs to the MAPRE family.

It is found in the cytoplasm. The protein resides in the cytoskeleton. The protein localises to the microtubule organizing center. It localises to the centrosome. Its subcellular location is the golgi apparatus. It is found in the spindle. The protein resides in the spindle pole. Its function is as follows. Plus-end tracking protein (+TIP) that binds to the plus-end of microtubules and regulates the dynamics of the microtubule cytoskeleton. Promotes cytoplasmic microtubule nucleation and elongation. Involved in mitotic spindle positioning by stabilizing microtubules and promoting dynamic connection between astral microtubules and the cortex during mitotic chromosome segregation. This chain is Microtubule-associated protein RP/EB family member 1 (MAPRE1), found in Coturnix japonica (Japanese quail).